Consider the following 200-residue polypeptide: UPF0301 protein BOV_0485 (200 aa).

It belongs to the UPF0301 (AlgH) family.

This is UPF0301 protein BOV_0485 from Brucella ovis (strain ATCC 25840 / 63/290 / NCTC 10512).